The chain runs to 208 residues: V-type ATP synthase subunit E (208 aa).

It belongs to the V-ATPase E subunit family.

Its function is as follows. Produces ATP from ADP in the presence of a proton gradient across the membrane. The polypeptide is V-type ATP synthase subunit E (Chlamydia felis (strain Fe/C-56) (Chlamydophila felis)).